A 103-amino-acid chain; its full sequence is MTGRGKGGKGLGKGGAKRHRKILRDNIQGITKPAIRRLARRGGVKRISAMIYEETRGVLKSFLESVIRDAVTYTEHAKRKTVTSLDVVYALKRQGRTLYGFGG.

The segment covering 1–14 has biased composition (gly residues); sequence MTGRGKGGKGLGKG. The segment at 1-20 is disordered; sequence MTGRGKGGKGLGKGGAKRHR. Lys-6 carries the post-translational modification N6-acetyl-N6-methyllysine; alternate. Lys-6, Lys-9, and Lys-13 each carry N6-methyllysine; alternate. An N6-acetyl-N6-methyllysine; alternate modification is found at Lys-13. The DNA-binding element occupies 17-21; the sequence is KRHRK. Lys-92 carries the N6-glutaryllysine modification.

This sequence belongs to the histone H4 family. In terms of assembly, the nucleosome is a histone octamer containing two molecules each of H2A, H2B, H3 and H4 assembled in one H3-H4 heterotetramer and two H2A-H2B heterodimers. The octamer wraps approximately 147 bp of DNA. Glutarylation at Lys-92 (H4K91glu) destabilizes nucleosomes by promoting dissociation of the H2A-H2B dimers from nucleosomes.

It is found in the nucleus. The protein resides in the chromosome. Core component of nucleosome. Nucleosomes wrap and compact DNA into chromatin, limiting DNA accessibility to the cellular machineries which require DNA as a template. Histones thereby play a central role in transcription regulation, DNA repair, DNA replication and chromosomal stability. DNA accessibility is regulated via a complex set of post-translational modifications of histones, also called histone code, and nucleosome remodeling. This is Histone H4.2 (H4.2) from Talaromyces funiculosus (Fruitlet core rot fungus).